We begin with the raw amino-acid sequence, 232 residues long: T-cell surface glycoprotein CD1b-3 (232 aa).

The Extracellular portion of the chain corresponds to 1 to 201 (GLQEFQFEYP…LYWGHPMYIG (201 aa)). 3 cysteine pairs are disulfide-bonded: cysteine 19–cysteine 83, cysteine 48–cysteine 62, and cysteine 123–cysteine 178. A glycan (N-linked (GlcNAc...) asparagine) is linked at asparagine 45. The Ig-like domain maps to 84–194 (PRYLLGVLDA…LGDQDIILYW (111 aa)). The helical transmembrane segment at 202 to 222 (LIFVAIIVPSLILLICLALWF) threads the bilayer. Residues 223–232 (WRRWSYQTVL) are Cytoplasmic-facing.

As to quaternary structure, heterodimer with B2M (beta-2-microglobulin). Interacts with saposin C.

It localises to the cell membrane. The protein resides in the endosome membrane. Its subcellular location is the lysosome membrane. Antigen-presenting protein that binds self and non-self lipid and glycolipid antigens and presents them to T-cell receptors on natural killer T-cells. This Ovis aries (Sheep) protein is T-cell surface glycoprotein CD1b-3.